Reading from the N-terminus, the 119-residue chain is Ribonuclease P protein component (119 aa).

It belongs to the RnpA family. In terms of assembly, consists of a catalytic RNA component (M1 or rnpB) and a protein subunit.

It catalyses the reaction Endonucleolytic cleavage of RNA, removing 5'-extranucleotides from tRNA precursor.. Its function is as follows. RNaseP catalyzes the removal of the 5'-leader sequence from pre-tRNA to produce the mature 5'-terminus. It can also cleave other RNA substrates such as 4.5S RNA. The protein component plays an auxiliary but essential role in vivo by binding to the 5'-leader sequence and broadening the substrate specificity of the ribozyme. The protein is Ribonuclease P protein component of Bacillus pumilus (strain SAFR-032).